An 88-amino-acid chain; its full sequence is Protein Aeq5-like1 (88 aa).

The first 20 residues, 1–20 (MKSVIAVLVLSLVLVNFTQA), serve as a signal peptide directing secretion. Disulfide bonds link Cys-29–Cys-68, Cys-33–Cys-64, Cys-40–Cys-56, and Cys-47–Cys-53.

As to expression, is expressed in the ectodermal cells of gastrulae and planulae. Is also noticeable in the endoderm in late planulae. In the primary polyps, is expressed in both ectoderm (sensory neurons) and endoderm (ganglions). Is not expressed in nematocytes.

Its function is as follows. Probable neuropeptide. The chain is Protein Aeq5-like1 from Nematostella vectensis (Starlet sea anemone).